Here is a 292-residue protein sequence, read N- to C-terminus: NAD kinase (292 aa).

The Proton acceptor role is filled by Asp-73. Residues 73-74 (DG), 147-148 (NE), His-158, Arg-175, Asp-177, 188-193 (TAYSLS), and Gln-247 contribute to the NAD(+) site.

This sequence belongs to the NAD kinase family. A divalent metal cation is required as a cofactor.

It localises to the cytoplasm. It catalyses the reaction NAD(+) + ATP = ADP + NADP(+) + H(+). Functionally, involved in the regulation of the intracellular balance of NAD and NADP, and is a key enzyme in the biosynthesis of NADP. Catalyzes specifically the phosphorylation on 2'-hydroxyl of the adenosine moiety of NAD to yield NADP. The polypeptide is NAD kinase (Edwardsiella ictaluri (strain 93-146)).